A 658-amino-acid chain; its full sequence is UvrABC system protein B (658 aa).

The 392-residue stretch at 25–416 folds into the Helicase ATP-binding domain; sequence KSLKNNNHYQ…QKNVAEQIIR (392 aa). An ATP-binding site is contributed by 38–45; that stretch reads GVTGSGKT. Positions 91–114 match the Beta-hairpin motif; it reads HFDYYQPESYIPRRDLFIEKDSSI. The Helicase C-terminal domain maps to 433 to 607; it reads QVQDLFDEIK…ELKLRDDEIK (175 aa). The UVR domain occupies 623-658; it reads EKIIKELDKKMRERAKNLDFEEAMRLRDEIAQLRTL.

Belongs to the UvrB family. As to quaternary structure, forms a heterotetramer with UvrA during the search for lesions. Interacts with UvrC in an incision complex.

Its subcellular location is the cytoplasm. Functionally, the UvrABC repair system catalyzes the recognition and processing of DNA lesions. A damage recognition complex composed of 2 UvrA and 2 UvrB subunits scans DNA for abnormalities. Upon binding of the UvrA(2)B(2) complex to a putative damaged site, the DNA wraps around one UvrB monomer. DNA wrap is dependent on ATP binding by UvrB and probably causes local melting of the DNA helix, facilitating insertion of UvrB beta-hairpin between the DNA strands. Then UvrB probes one DNA strand for the presence of a lesion. If a lesion is found the UvrA subunits dissociate and the UvrB-DNA preincision complex is formed. This complex is subsequently bound by UvrC and the second UvrB is released. If no lesion is found, the DNA wraps around the other UvrB subunit that will check the other stand for damage. The protein is UvrABC system protein B of Helicobacter pylori (strain J99 / ATCC 700824) (Campylobacter pylori J99).